The following is a 440-amino-acid chain: MYKSPLTLLTLLTICFGFFDLSSALYGSSSPVVQLTASNFKSKVLNSNGVVLVEFFAPWCGHCKALTPTWEKVANILKGVATVAAIDADAHQSAAQDYGIKGFPTIKVFVPGKAPIDYQGARDAKSIANFAYKQIKGLLSDRLEGKSKPTGGGSKEKKSEPSASVELNASNFDDLVIESNELWIVEFFAPWCGHCKKLAPEWKRAAKNLQGKVKLGHVNCDVEQSIMSRFKVQGFPTILVFGPDKSSPYPYEGARSASAIESFASELVESSAGPVEVTELTGPDVMEKKCGSAAICFISFLPDILDSKAEGRNKYLEMLLSVAEKFKKQPYSFMWVAAVTQMDLEKRVNVGGYGYPAMVAMNVKKGVYAPLKSAFELQHLLEFVKDAGTGGKGNVPMNGTPEIVKTKEWDGKDGELIEEDEFSLDELMGGDDAVGSKDEL.

Positions 1–24 (MYKSPLTLLTLLTICFGFFDLSSA) are cleaved as a signal peptide. 2 Thioredoxin domains span residues 25 to 136 (LYGS…KQIK) and 154 to 269 (SKEK…ELVE). Active-site nucleophile residues include Cys-60 and Cys-63. Cys-60 and Cys-63 are disulfide-bonded. A disordered region spans residues 143-163 (LEGKSKPTGGGSKEKKSEPSA). Residue Asn-168 is glycosylated (N-linked (GlcNAc...) asparagine). Active-site nucleophile residues include Cys-192 and Cys-195. Cys-192 and Cys-195 are oxidised to a cystine. The Prevents secretion from ER motif lies at 437–440 (KDEL).

This sequence belongs to the protein disulfide isomerase family. Widely expressed.

Its subcellular location is the endoplasmic reticulum lumen. The enzyme catalyses Catalyzes the rearrangement of -S-S- bonds in proteins.. In terms of biological role, acts as a protein-folding catalyst that interacts with nascent polypeptides to catalyze the formation, isomerization, and reduction or oxidation of disulfide bonds. In Arabidopsis thaliana (Mouse-ear cress), this protein is Protein disulfide-isomerase 2-3 (PDIL2-3).